The primary structure comprises 78 residues: Protein Vpr (78 aa).

The tract at residues methionine 1–leucine 42 is homooligomerization.

This sequence belongs to the HIV-1 VPR protein family. As to quaternary structure, homooligomer, may form homodimer. Interacts with p6-gag region of the Pr55 Gag precursor protein through a (Leu-X-X)4 motif near the C-terminus of the P6gag protein. Interacts with host UNG. May interact with host RAD23A/HHR23A. Interacts with host VPRBP/DCAF1, leading to hijack the CUL4A-RBX1-DDB1-DCAF1/VPRBP complex, mediating ubiquitination of host proteins such as TERT and ZGPAT and arrest of the cell cycle in G2 phase. Phosphorylated on several residues by host. These phosphorylations regulate VPR activity for the nuclear import of the HIV-1 pre-integration complex.

It is found in the virion. The protein resides in the host nucleus. It localises to the host extracellular space. Its function is as follows. During virus replication, may deplete host UNG protein, and incude G2-M cell cycle arrest. Acts by targeting specific host proteins for degradation by the 26S proteasome, through association with the cellular CUL4A-DDB1 E3 ligase complex by direct interaction with host VPRPB/DCAF-1. Cell cycle arrest reportedly occurs within hours of infection and is not blocked by antiviral agents, suggesting that it is initiated by the VPR carried into the virion. Additionally, VPR induces apoptosis in a cell cycle dependent manner suggesting that these two effects are mechanistically linked. Detected in the serum and cerebrospinal fluid of AIDS patient, VPR may also induce cell death to bystander cells. During virus entry, plays a role in the transport of the viral pre-integration (PIC) complex to the host nucleus. This function is crucial for viral infection of non-dividing macrophages. May act directly at the nuclear pore complex, by binding nucleoporins phenylalanine-glycine (FG)-repeat regions. The polypeptide is Protein Vpr (Human immunodeficiency virus type 1 group M subtype B (isolate PCV12) (HIV-1)).